The primary structure comprises 1303 residues: DNA-directed RNA polymerase subunit beta (1303 aa).

Belongs to the RNA polymerase beta chain family. In terms of assembly, the RNAP catalytic core consists of 2 alpha, 1 beta, 1 beta' and 1 omega subunit. When a sigma factor is associated with the core the holoenzyme is formed, which can initiate transcription.

It carries out the reaction RNA(n) + a ribonucleoside 5'-triphosphate = RNA(n+1) + diphosphate. Functionally, DNA-dependent RNA polymerase catalyzes the transcription of DNA into RNA using the four ribonucleoside triphosphates as substrates. This Chlorobaculum tepidum (strain ATCC 49652 / DSM 12025 / NBRC 103806 / TLS) (Chlorobium tepidum) protein is DNA-directed RNA polymerase subunit beta.